The sequence spans 219 residues: Pyridoxal 5'-phosphate synthase subunit PDX2 (219 aa).

52–54 provides a ligand contact to L-glutamine; it reads GES. The active-site Nucleophile is the Cys87. Residues Arg121 and 153–154 each bind L-glutamine; that span reads IR. Residues His196 and Glu198 each act as charge relay system in the active site.

The protein belongs to the glutaminase PdxT/SNO family. In terms of assembly, in the presence of Pdx1, forms a dodecamer of heterodimers. Only shows activity in the heterodimer.

It is found in the cytoplasm. The enzyme catalyses aldehydo-D-ribose 5-phosphate + D-glyceraldehyde 3-phosphate + L-glutamine = pyridoxal 5'-phosphate + L-glutamate + phosphate + 3 H2O + H(+). It catalyses the reaction L-glutamine + H2O = L-glutamate + NH4(+). Its pathway is cofactor biosynthesis; pyridoxal 5'-phosphate biosynthesis. In terms of biological role, catalyzes the hydrolysis of glutamine to glutamate and ammonia as part of the biosynthesis of pyridoxal 5'-phosphate. The resulting ammonia molecule is channeled to the active site of Pdx1. This Plasmodium falciparum (isolate 3D7) protein is Pyridoxal 5'-phosphate synthase subunit PDX2.